Reading from the N-terminus, the 201-residue chain is MSRYRGPRLKKIRRLGALPGLTRKTPKSGSNQKKKFHSGKKEQYRIRLQEKQKLRFHYGLTERQLLRYVHIAGKAKRSTGQVLLQLLEMRLDNILFRLGMASTIPGARQLVNHRHILVNGRIVDIPSFRCKPRDIITTKDNQRSKRLVQNYIASSDPGKLPKHLTVDTLQYKGLVKKILDRKWVGLKINELLVVEYYSRQT.

Residues Leu15–Gln43 form a disordered region. Positions Met89–Asn150 constitute an S4 RNA-binding domain.

This sequence belongs to the universal ribosomal protein uS4 family. In terms of assembly, part of the 30S ribosomal subunit. Contacts protein S5. The interaction surface between S4 and S5 is involved in control of translational fidelity.

It is found in the plastid. It localises to the chloroplast. In terms of biological role, one of the primary rRNA binding proteins, it binds directly to 16S rRNA where it nucleates assembly of the body of the 30S subunit. With S5 and S12 plays an important role in translational accuracy. The chain is Small ribosomal subunit protein uS4c (rps4) from Sorghum bicolor (Sorghum).